An 894-amino-acid polypeptide reads, in one-letter code: Leucine--tRNA ligase, mitochondrial (894 aa).

The transit peptide at 1–9 directs the protein to the mitochondrion; the sequence is MLPRPSSRF. Residues 56 to 66 carry the 'HIGH' region motif; it reads PYPSGVLHIGH. Residues 646 to 650 carry the 'KMSKS' region motif; that stretch reads KMSKS. Lys649 provides a ligand contact to ATP.

It belongs to the class-I aminoacyl-tRNA synthetase family.

The protein localises to the mitochondrion matrix. The catalysed reaction is tRNA(Leu) + L-leucine + ATP = L-leucyl-tRNA(Leu) + AMP + diphosphate. This Saccharomyces paradoxus (Yeast) protein is Leucine--tRNA ligase, mitochondrial (NAM2).